Consider the following 2138-residue polypeptide: Protein virilizer homolog (2138 aa).

Disordered stretches follow at residues 1503 to 1574, 1638 to 1664, 1855 to 1881, 2013 to 2035, and 2058 to 2094; these read RLPQ…SMHV, NPTPARDTEKVAGKPKQFKADPDDDLQ, PVIPHSSDSLSNQSSPFISHGTQSSGG, PMQPPQHVRPPIQISQPSEQGVS, and YYHPPQQQEISQVQQQQQHHAVQGQQGAGTSQQQESG. A compositionally biased stretch (polar residues) spans 1528–1541; sequence ENSSVDIPTQNSIQ. Composition is skewed to polar residues over residues 1862–1881 and 2025–2035; these read DSLSNQSSPFISHGTQSSGG and QISQPSEQGVS.

The protein belongs to the vir family. In terms of assembly, interacts with MTB, FIP37 and HAKAI. Associates with MTA, MTB, FIP37 and HAKAI to form the m6A writer complex which is essential for adenosine methylation at specific mRNA sequences.

It is found in the nucleus speckle. It localises to the nucleus. The protein resides in the nucleoplasm. Subunit of the N6-methyltransferase complex, a multiprotein complex that mediates N6-methyladenosine (m6A) methylation at the 5'-[AG]GAC-3' consensus sites of some mRNAs. Associates with MTA, MTB, FIP37 and HAKAI to form the m6A writer complex which is essential for adenosine methylation at specific mRNA sequences. N6-methyladenosine (m6A) plays a role in mRNA stability, processing, translation efficiency and editing. The polypeptide is Protein virilizer homolog (Arabidopsis thaliana (Mouse-ear cress)).